Reading from the N-terminus, the 232-residue chain is Phosphatidylserine decarboxylase proenzyme (232 aa).

The active-site Schiff-base intermediate with substrate; via pyruvic acid is Ser190. Ser190 is subject to Pyruvic acid (Ser); by autocatalysis.

It belongs to the phosphatidylserine decarboxylase family. PSD-A subfamily. In terms of assembly, heterodimer of a large membrane-associated beta subunit and a small pyruvoyl-containing alpha subunit. The cofactor is pyruvate. Is synthesized initially as an inactive proenzyme. Formation of the active enzyme involves a self-maturation process in which the active site pyruvoyl group is generated from an internal serine residue via an autocatalytic post-translational modification. Two non-identical subunits are generated from the proenzyme in this reaction, and the pyruvate is formed at the N-terminus of the alpha chain, which is derived from the carboxyl end of the proenzyme. The post-translation cleavage follows an unusual pathway, termed non-hydrolytic serinolysis, in which the side chain hydroxyl group of the serine supplies its oxygen atom to form the C-terminus of the beta chain, while the remainder of the serine residue undergoes an oxidative deamination to produce ammonia and the pyruvoyl prosthetic group on the alpha chain.

The protein resides in the cell membrane. The catalysed reaction is a 1,2-diacyl-sn-glycero-3-phospho-L-serine + H(+) = a 1,2-diacyl-sn-glycero-3-phosphoethanolamine + CO2. The protein operates within phospholipid metabolism; phosphatidylethanolamine biosynthesis; phosphatidylethanolamine from CDP-diacylglycerol: step 2/2. Functionally, catalyzes the formation of phosphatidylethanolamine (PtdEtn) from phosphatidylserine (PtdSer). The sequence is that of Phosphatidylserine decarboxylase proenzyme from Rhodopseudomonas palustris (strain ATCC BAA-98 / CGA009).